The primary structure comprises 427 residues: Thymidine phosphorylase (427 aa).

It belongs to the thymidine/pyrimidine-nucleoside phosphorylase family. In terms of assembly, homodimer.

It catalyses the reaction thymidine + phosphate = 2-deoxy-alpha-D-ribose 1-phosphate + thymine. The enzymes which catalyze the reversible phosphorolysis of pyrimidine nucleosides are involved in the degradation of these compounds and in their utilization as carbon and energy sources, or in the rescue of pyrimidine bases for nucleotide synthesis. The sequence is that of Thymidine phosphorylase (deoA) from Mycobacterium tuberculosis (strain CDC 1551 / Oshkosh).